Here is a 78-residue protein sequence, read N- to C-terminus: Acyl carrier protein (78 aa).

Residues 2–77 enclose the Carrier domain; it reads STIEERVKKI…AAIDYVKAHQ (76 aa). At Ser-37 the chain carries O-(pantetheine 4'-phosphoryl)serine.

The protein belongs to the acyl carrier protein (ACP) family. In terms of processing, 4'-phosphopantetheine is transferred from CoA to a specific serine of apo-ACP by AcpS. This modification is essential for activity because fatty acids are bound in thioester linkage to the sulfhydryl of the prosthetic group.

Its subcellular location is the cytoplasm. Its pathway is lipid metabolism; fatty acid biosynthesis. Its function is as follows. Carrier of the growing fatty acid chain in fatty acid biosynthesis. The protein is Acyl carrier protein of Pseudomonas putida (strain ATCC 700007 / DSM 6899 / JCM 31910 / BCRC 17059 / LMG 24140 / F1).